Consider the following 158-residue polypeptide: NAD(P)H-quinone oxidoreductase subunit J, chloroplastic (158 aa).

Belongs to the complex I 30 kDa subunit family. In terms of assembly, NDH is composed of at least 16 different subunits, 5 of which are encoded in the nucleus.

It localises to the plastid. It is found in the chloroplast thylakoid membrane. The enzyme catalyses a plastoquinone + NADH + (n+1) H(+)(in) = a plastoquinol + NAD(+) + n H(+)(out). It carries out the reaction a plastoquinone + NADPH + (n+1) H(+)(in) = a plastoquinol + NADP(+) + n H(+)(out). NDH shuttles electrons from NAD(P)H:plastoquinone, via FMN and iron-sulfur (Fe-S) centers, to quinones in the photosynthetic chain and possibly in a chloroplast respiratory chain. The immediate electron acceptor for the enzyme in this species is believed to be plastoquinone. Couples the redox reaction to proton translocation, and thus conserves the redox energy in a proton gradient. The protein is NAD(P)H-quinone oxidoreductase subunit J, chloroplastic of Ceratophyllum demersum (Rigid hornwort).